A 1102-amino-acid chain; its full sequence is Putative helicase/primase complex protein (1102 aa).

Disordered stretches follow at residues 1031–1057 (TKEEISSTKEETYSTKEETYSTKEETC) and 1082–1102 (EETCSIKEETSSIKEETFTET).

This sequence belongs to the asfivirus F1055L family.

May be involved in DNA replication. The polypeptide is Putative helicase/primase complex protein (African swine fever virus (isolate Tick/Malawi/Lil 20-1/1983) (ASFV)).